Reading from the N-terminus, the 312-residue chain is Olfactory receptor 6X1 (312 aa).

Residues 1-23 (MRNGTVITEFILLGFPVIQGLQT) lie on the Extracellular side of the membrane. N-linked (GlcNAc...) asparagine glycosylation is present at Asn-3. A helical transmembrane segment spans residues 24–44 (PLFIAIFLTYILTLAGNGLII). Residues 45 to 52 (ATVWAEPR) are Cytoplasmic-facing. Residues 53-73 (LQIPMYFFLCNLSFLEIWYTT) form a helical membrane-spanning segment. The Extracellular segment spans residues 74–97 (TVIPKLLGTFVVARTVICMSCCLL). Cys-95 and Cys-187 are disulfide-bonded. Residues 98–118 (QAFFHFFVGTTEFLILTIMSF) form a helical membrane-spanning segment. The Cytoplasmic segment spans residues 119–137 (DRYLTICNPLHHPTIMTSK). Residues 138 to 158 (LCLQLALSSWVVGFTIVFCQT) traverse the membrane as a helical segment. The Extracellular segment spans residues 159–195 (MLLIQLPFCGNNVISHFYCDVGPSLKAACIDTSILEL). A helical membrane pass occupies residues 196 to 215 (LGVIATILVIPGSLLFNMIS). Topologically, residues 216-235 (YIYILSAILRIPSATGHQKT) are cytoplasmic. A helical membrane pass occupies residues 236–256 (FSTCASHLTVVSLLYGAVLFM). The Extracellular segment spans residues 257 to 269 (YLRPTAHSSFKIN). A helical transmembrane segment spans residues 270–290 (KVVSVLNTILTPLLNPFIYTI). The Cytoplasmic portion of the chain corresponds to 291–312 (RNKEVKGALRKAMTCPKTGHAK).

The protein belongs to the G-protein coupled receptor 1 family.

The protein resides in the cell membrane. Its function is as follows. Odorant receptor. This chain is Olfactory receptor 6X1 (OR6X1), found in Homo sapiens (Human).